Reading from the N-terminus, the 234-residue chain is Large ribosomal subunit protein uL1 (234 aa).

Belongs to the universal ribosomal protein uL1 family. Part of the 50S ribosomal subunit.

In terms of biological role, binds directly to 23S rRNA. The L1 stalk is quite mobile in the ribosome, and is involved in E site tRNA release. Its function is as follows. Protein L1 is also a translational repressor protein, it controls the translation of the L11 operon by binding to its mRNA. This chain is Large ribosomal subunit protein uL1, found in Aliivibrio salmonicida (strain LFI1238) (Vibrio salmonicida (strain LFI1238)).